The following is a 389-amino-acid chain: Na(+)/H(+) antiporter NhaA (389 aa).

11 helical membrane passes run 17–37, 59–79, 95–115, 124–144, 154–174, 177–197, 213–233, 261–281, 287–307, 328–348, and 363–383; these read ILLL…LAGL, LLLW…GLEV, SLPT…YLLF, AGWA…MALL, VFLL…IALF, TDLS…LVAL, LVLW…GVII, FLIL…NMSL, PVPV…VMLF, IAPV…IASL, and LGTL…LSKV.

This sequence belongs to the NhaA Na(+)/H(+) (TC 2.A.33) antiporter family.

It is found in the cell inner membrane. It catalyses the reaction Na(+)(in) + 2 H(+)(out) = Na(+)(out) + 2 H(+)(in). Its function is as follows. Na(+)/H(+) antiporter that extrudes sodium in exchange for external protons. The chain is Na(+)/H(+) antiporter NhaA from Shewanella sp. (strain MR-7).